Here is a 371-residue protein sequence, read N- to C-terminus: Cyanide hydratase (371 aa).

A CN hydrolase domain is found at 6–285 (YKAAAVTSEP…DGLLYVDIDL (280 aa)). The active-site Proton acceptor is the glutamate 46. Lysine 128 is an active-site residue. Cysteine 163 functions as the Nucleophile in the catalytic mechanism. Positions 339-353 (GLNRPLDPPKDERHG) are enriched in basic and acidic residues. Positions 339–371 (GLNRPLDPPKDERHGIVGVAGQKSAEQRKAGDL) are disordered.

The protein belongs to the carbon-nitrogen hydrolase superfamily. Nitrilase family. As to quaternary structure, oligomer of dimers, forming left-handed helical fibers.

The catalysed reaction is formamide = hydrogen cyanide + H2O. Its function is as follows. Catalyzes the hydration of cyanide to formamide. Degradation of cyanide may be important for plant pathogenic fungi in infection of cyanogenic plants. Also acts on 2-cyanopyridine, fumaronitrile and benzonitrile, albeit at a lower rate. The chain is Cyanide hydratase (nit) from Stereum hirsutum (strain FP-91666) (White-rot fungus).